The chain runs to 357 residues: 4-hydroxy-3-methylbut-2-en-1-yl diphosphate synthase (flavodoxin) (357 aa).

[4Fe-4S] cluster contacts are provided by cysteine 264, cysteine 267, cysteine 299, and glutamate 306.

Belongs to the IspG family. [4Fe-4S] cluster serves as cofactor.

The catalysed reaction is (2E)-4-hydroxy-3-methylbut-2-enyl diphosphate + oxidized [flavodoxin] + H2O + 2 H(+) = 2-C-methyl-D-erythritol 2,4-cyclic diphosphate + reduced [flavodoxin]. Its pathway is isoprenoid biosynthesis; isopentenyl diphosphate biosynthesis via DXP pathway; isopentenyl diphosphate from 1-deoxy-D-xylulose 5-phosphate: step 5/6. In terms of biological role, converts 2C-methyl-D-erythritol 2,4-cyclodiphosphate (ME-2,4cPP) into 1-hydroxy-2-methyl-2-(E)-butenyl 4-diphosphate. This chain is 4-hydroxy-3-methylbut-2-en-1-yl diphosphate synthase (flavodoxin), found in Campylobacter jejuni subsp. jejuni serotype O:23/36 (strain 81-176).